A 343-amino-acid chain; its full sequence is Heme A synthase (343 aa).

8 helical membrane passes run 13–33 (VALW…VGGA), 96–116 (HRLL…FFLI), 130–150 (VLLG…SSGL), 165–185 (LGLA…AWAG), 197–217 (GWAL…ALVA), 258–278 (LHHR…GVAA), 290–310 (LTAF…IWTL), and 311–331 (MTAV…ILLA). A heme-binding site is contributed by H260. H322 lines the heme pocket.

Belongs to the COX15/CtaA family. Type 2 subfamily. In terms of assembly, interacts with CtaB. The cofactor is heme b.

The protein resides in the cell membrane. The enzyme catalyses Fe(II)-heme o + 2 A + H2O = Fe(II)-heme a + 2 AH2. The protein operates within porphyrin-containing compound metabolism; heme A biosynthesis; heme A from heme O: step 1/1. In terms of biological role, catalyzes the conversion of heme O to heme A by two successive hydroxylations of the methyl group at C8. The first hydroxylation forms heme I, the second hydroxylation results in an unstable dihydroxymethyl group, which spontaneously dehydrates, resulting in the formyl group of heme A. The polypeptide is Heme A synthase (Caulobacter sp. (strain K31)).